Reading from the N-terminus, the 151-residue chain is UPF0756 membrane protein LBA0919 (151 aa).

Transmembrane regions (helical) follow at residues 4-24 (WLFL…SLII), 52-72 (WGVT…QIGF), 78-98 (TFKT…AVLS), and 115-135 (LVLG…GPVI).

Belongs to the UPF0756 family.

The protein resides in the cell membrane. In Lactobacillus acidophilus (strain ATCC 700396 / NCK56 / N2 / NCFM), this protein is UPF0756 membrane protein LBA0919.